The sequence spans 400 residues: Aspartate/prephenate aminotransferase (400 aa).

L-aspartate-binding residues include G39, W125, and N175. Residue K239 is modified to N6-(pyridoxal phosphate)lysine. R375 is an L-aspartate binding site.

It belongs to the class-I pyridoxal-phosphate-dependent aminotransferase family. Homodimer. It depends on pyridoxal 5'-phosphate as a cofactor.

Its subcellular location is the cytoplasm. It catalyses the reaction L-aspartate + 2-oxoglutarate = oxaloacetate + L-glutamate. It carries out the reaction L-arogenate + 2-oxoglutarate = prephenate + L-glutamate. In terms of biological role, catalyzes the reversible conversion of aspartate and 2-oxoglutarate to glutamate and oxaloacetate. Can also transaminate prephenate in the presence of glutamate. The sequence is that of Aspartate/prephenate aminotransferase from Cereibacter sphaeroides (strain ATCC 17029 / ATH 2.4.9) (Rhodobacter sphaeroides).